The primary structure comprises 345 residues: Centromere protein L (345 aa).

Residues serine 40 and serine 54 each carry the phosphoserine modification.

The protein belongs to the CENP-L/IML3 family. As to quaternary structure, component of the CENPA-CAD complex, composed of CENPI, CENPK, CENPL, CENPO, CENPP, CENPQ, CENPR and CENPS. The CENPA-CAD complex interacts with the CENPA-NAC complex, at least composed of CENPA, CENPC, CENPH, CENPM, CENPN, CENPT and CENPU.

It is found in the nucleus. The protein localises to the chromosome. It localises to the centromere. In terms of biological role, component of the CENPA-CAD (nucleosome distal) complex, a complex recruited to centromeres which is involved in assembly of kinetochore proteins, mitotic progression and chromosome segregation. May be involved in incorporation of newly synthesized CENPA into centromeres via its interaction with the CENPA-NAC complex. The protein is Centromere protein L (Cenpl) of Rattus norvegicus (Rat).